The sequence spans 288 residues: 4-diphosphocytidyl-2-C-methyl-D-erythritol kinase (288 aa).

The active site involves Lys-8. ATP is bound at residue 90 to 100 (PLEAGLAGGSA). The active site involves Asp-132.

Belongs to the GHMP kinase family. IspE subfamily.

It catalyses the reaction 4-CDP-2-C-methyl-D-erythritol + ATP = 4-CDP-2-C-methyl-D-erythritol 2-phosphate + ADP + H(+). The protein operates within isoprenoid biosynthesis; isopentenyl diphosphate biosynthesis via DXP pathway; isopentenyl diphosphate from 1-deoxy-D-xylulose 5-phosphate: step 3/6. Its function is as follows. Catalyzes the phosphorylation of the position 2 hydroxy group of 4-diphosphocytidyl-2C-methyl-D-erythritol. The chain is 4-diphosphocytidyl-2-C-methyl-D-erythritol kinase from Carboxydothermus hydrogenoformans (strain ATCC BAA-161 / DSM 6008 / Z-2901).